Here is a 377-residue protein sequence, read N- to C-terminus: Rhodopsin, long-wavelength (377 aa).

The Extracellular portion of the chain corresponds to 1 to 51; the sequence is MIAVSGPSYEAFSYGGQARFNNQTVVDKVPPDMLHLIDANWYQYPPLNPMW. An N-linked (GlcNAc...) asparagine glycan is attached at Asn22. Residues 52–76 form a helical membrane-spanning segment; it reads HGILGFVIGMLGFVSAMGNGMVVYI. Topologically, residues 77 to 88 are cytoplasmic; that stretch reads FLSTKSLRTPSN. Residues 89–113 form a helical membrane-spanning segment; it reads LFVINLAISNFLMMFCMSPPMVINC. Residues 114–128 lie on the Extracellular side of the membrane; that stretch reads YYETWVLGPLFCQIY. Cys125 and Cys202 form a disulfide bridge. Residues 129–148 traverse the membrane as a helical segment; it reads AMLGSLFGCGSIWTMTMIAF. Topologically, residues 149–167 are cytoplasmic; the sequence is DRYNVIVKGLSGKPLSING. Residues 168-191 traverse the membrane as a helical segment; that stretch reads ALIRIIAIWLFSLGWTIAPMFGWN. The Extracellular segment spans residues 192 to 215; the sequence is RYVPEGNMTACGTDYFNRGLLSAS. Asn198 carries an N-linked (GlcNAc...) asparagine glycan. A helical transmembrane segment spans residues 216–243; sequence YLVCYGIWVYFVPLFLIIYSYWFIIQAV. Over 244–278 the chain is Cytoplasmic; the sequence is AAHEKNMREQAKKMNVASLRSSENQNTSAECKLAK. The chain crosses the membrane as a helical span at residues 279–302; sequence VALMTISLWFMAWTPYLVINFSGI. Topologically, residues 303–309 are extracellular; it reads FNLVKIS. Residues 310–334 form a helical membrane-spanning segment; sequence PLFTIWGSLFAKANAVYNPIVYGIS. Position 321 is an N6-(retinylidene)lysine (Lys321). Residues 335–377 are Cytoplasmic-facing; it reads HPKYRAALFAKFPSLACAAEPSSDAVSTTSGTTTVTDNEKSNA. Over residues 357–370 the composition is skewed to low complexity; it reads SDAVSTTSGTTTVT. The interval 357 to 377 is disordered; sequence SDAVSTTSGTTTVTDNEKSNA.

The protein belongs to the G-protein coupled receptor 1 family. Opsin subfamily. Phosphorylated on some or all of the serine and threonine residues present in the C-terminal region.

The protein localises to the membrane. In terms of biological role, visual pigments are the light-absorbing molecules that mediate vision. They consist of an apoprotein, opsin, covalently linked to 11-cis-retinal. This chain is Rhodopsin, long-wavelength, found in Apis mellifera (Honeybee).